The following is a 349-amino-acid chain: Transcription factor HBP-1a (349 aa).

A compositionally biased stretch (polar residues) spans 1–11; that stretch reads MGSNDPSTPSK. Disordered regions lie at residues 1 to 39, 101 to 196, 224 to 277, and 312 to 349; these read MGSN…WPGF, FHYP…NKPM, GATG…QAEC, and NTSL…QKEP. Residues 113 to 124 are compositionally biased toward low complexity; it reads PAGAQGAAPGAA. Residues 174–191 are compositionally biased toward polar residues; sequence NENGSAQNGVSHSSSHGT. Positions 252–315 constitute a bZIP domain; sequence ELKKQKRKLS…EELLSKNTSL (64 aa). Residues 254–273 form a basic motif region; it reads KKQKRKLSNRESARRSRLRK. Positions 261 to 277 are enriched in basic and acidic residues; the sequence is SNRESARRSRLRKQAEC. Residues 280-315 form a leucine-zipper region; that stretch reads LGQRAEALKSENSSLRIELDRIKKEYEELLSKNTSL. Over residues 334–349 the composition is skewed to basic and acidic residues; sequence MNERGDTNGGSHQKEP.

The protein belongs to the bZIP family. As to quaternary structure, binds DNA as a dimer.

Its subcellular location is the nucleus. Binds to the hexamer motif 5'-ACGTCA-3' of histone gene promoters. The sequence is that of Transcription factor HBP-1a from Triticum aestivum (Wheat).